The sequence spans 408 residues: MKVLVINAGSSSLKYQLIDMTNESALAVGLCERIGIDNSIITQKKFDGKKLEKLTDLPTHKDALEEVVKALTDDEFGVIKDMGEINAVGHRVVHGGEKFTTSALYDEGVEKAIKDCFELAPLHNPPNMMGISACAEIMPGTPMVIVFDTAFHQTMPPYAYMYALPYDLYEKHGVRKYGFHGTSHKYVAERAALMLGKPAEETKIITCHLGNGSSITAVEGGKSVETSMGFTPLEGLAMGTRCGSIDPAIVPFLMEKEGLTTREIDTLMNKKSGVLGVSGLSNDFRDLDEAASKGNRKAELALEIFAYKVKKFIGEYSAVLNGADAVVFTAGIGENSASIRKRILTGLDGIGIKIDDEKNKIRGQEIDISTPDAKVRVFVIPTNEELAIARETKEIVETEVKLRSSIPV.

Position 7 (asparagine 7) interacts with Mg(2+). Lysine 14 provides a ligand contact to ATP. A substrate-binding site is contributed by arginine 91. Aspartate 148 acts as the Proton donor/acceptor in catalysis. ATP-binding positions include 208 to 212, 283 to 285, and 331 to 335; these read HLGNG, DFR, and GIGEN. Glutamate 384 is a Mg(2+) binding site.

This sequence belongs to the acetokinase family. In terms of assembly, homodimer. It depends on Mg(2+) as a cofactor. The cofactor is Mn(2+).

The protein localises to the cytoplasm. It carries out the reaction acetate + ATP = acetyl phosphate + ADP. It participates in metabolic intermediate biosynthesis; acetyl-CoA biosynthesis; acetyl-CoA from acetate: step 1/2. With respect to regulation, inhibited by diethylpyrocarbonate, hydroxylamine and phenylglyoxal. Functionally, catalyzes the formation of acetyl phosphate from acetate and ATP. Can also catalyze the reverse reaction. Can also phosphorylate propionate, but has very low activity toward butyrate. This Methanosarcina thermophila protein is Acetate kinase.